The primary structure comprises 302 residues: MRLPRRLKIKRFHKPSCSSILPKYPGCPFSLNLSLSFLNFTHYDVHLQMINRFFPNVYYSVVIPIILLSTSYSAKIAPKCRDTDMNCAVWVATNTSDCENVELVNSHCPRTCQTCGEPIDPKYDVKLLPAKLKSIAWMVGRWRSEFGGKAFFPTIPKFTYGEQVDITIADNSQDTHTPLLNYTAFAWDINMPDGDPTEIHSENGYIAVEYDKEQEKEYVSLNTAMSNGFMTIEEGESGPNQVKFRLQRIGRISFSHDSAVRIMFREWTLLDENRLEARLLMTTTITRRLMEHTAVIYKKIYP.

N-linked (GlcNAc...) asparagine glycans are attached at residues asparagine 32, asparagine 39, and asparagine 94. Residues 80 to 115 (CRDTDMNCAVWVATNTSDCENVELVNSHCPRTCQTC) form the ShKT domain. Cystine bridges form between cysteine 80/cysteine 115, cysteine 87/cysteine 108, and cysteine 98/cysteine 112. An N-linked (GlcNAc...) asparagine glycan is attached at asparagine 181.

This is an uncharacterized protein from Caenorhabditis elegans.